Reading from the N-terminus, the 75-residue chain is Small ribosomal subunit protein bS18c (75 aa).

Belongs to the bacterial ribosomal protein bS18 family. Part of the 30S ribosomal subunit.

Its subcellular location is the plastid. The protein resides in the chloroplast. The polypeptide is Small ribosomal subunit protein bS18c (Psilotum nudum (Whisk fern)).